A 268-amino-acid chain; its full sequence is Protein DEEPER ROOTING 1 (268 aa).

A compositionally biased stretch (low complexity) spans leucine 11 to asparagine 21. A disordered region spans residues leucine 11–serine 39. The span at alanine 30 to serine 39 shows a compositional bias: basic and acidic residues. An IGT motif motif is present at residues glycine 44–threonine 50. A disordered region spans residues serine 220–threonine 246. Residues lysine 227–threonine 246 are compositionally biased toward basic and acidic residues.

Belongs to the LAZY family. In terms of tissue distribution, expressed in roots.

Involved in the development of the root system architecture by influencing lateral root angles and primary root length. In Prunus persica (Peach), this protein is Protein DEEPER ROOTING 1.